Here is a 183-residue protein sequence, read N- to C-terminus: Large ribosomal subunit protein uL6 (183 aa).

It belongs to the universal ribosomal protein uL6 family. In terms of assembly, part of the 50S ribosomal subunit.

Functionally, this protein binds to the 23S rRNA, and is important in its secondary structure. It is located near the subunit interface in the base of the L7/L12 stalk, and near the tRNA binding site of the peptidyltransferase center. The chain is Large ribosomal subunit protein uL6 from Chlamydia muridarum (strain MoPn / Nigg).